The sequence spans 208 residues: Uracil phosphoribosyltransferase (208 aa).

5-phospho-alpha-D-ribose 1-diphosphate is bound by residues R78, R103, and 130–138 (DPMLATGGS). Uracil is bound by residues I193 and 198–200 (GDA). D199 contributes to the 5-phospho-alpha-D-ribose 1-diphosphate binding site.

It belongs to the UPRTase family. The cofactor is Mg(2+).

It carries out the reaction UMP + diphosphate = 5-phospho-alpha-D-ribose 1-diphosphate + uracil. The protein operates within pyrimidine metabolism; UMP biosynthesis via salvage pathway; UMP from uracil: step 1/1. With respect to regulation, allosterically activated by GTP. Its function is as follows. Catalyzes the conversion of uracil and 5-phospho-alpha-D-ribose 1-diphosphate (PRPP) to UMP and diphosphate. This Sodalis glossinidius (strain morsitans) protein is Uracil phosphoribosyltransferase.